Reading from the N-terminus, the 363-residue chain is Peptide chain release factor 1 (363 aa).

At Gln-237 the chain carries N5-methylglutamine. Residues 284-296 (EDEKRRSAEESTR) show a composition bias toward basic and acidic residues. Positions 284–305 (EDEKRRSAEESTRRSLVASGDR) are disordered.

This sequence belongs to the prokaryotic/mitochondrial release factor family. Post-translationally, methylated by PrmC. Methylation increases the termination efficiency of RF1.

It localises to the cytoplasm. In terms of biological role, peptide chain release factor 1 directs the termination of translation in response to the peptide chain termination codons UAG and UAA. The sequence is that of Peptide chain release factor 1 from Shewanella baltica (strain OS185).